Reading from the N-terminus, the 1083-residue chain is Kinesin-like protein klp-19 (1083 aa).

A Kinesin motor domain is found at 6 to 328 (SLRVVVRARP…LRYADRAKQI (323 aa)). ATP is bound at residue 85–92 (GQTGSGKT). Positions 408-435 (MSALTQKNSRLEEDKAKLQSMLTDVRNT) form a coiled coil. Residues 458 to 471 (TEESTTLADDDNDE) are compositionally biased toward acidic residues. Residues 458–479 (TEESTTLADDDNDETALGGQDD) are disordered. Positions 487–650 (LPELQAELDD…KSKLQKREND (164 aa)) form a coiled coil. Polar residues predominate over residues 1044–1055 (DDSQPSPSNSTF). The disordered stretch occupies residues 1044 to 1083 (DDSQPSPSNSTFVIGAAPTSEADGVPPIKRKSRRTDLGPL).

The protein belongs to the TRAFAC class myosin-kinesin ATPase superfamily. Kinesin family. As to expression, expressed in the gonad.

The protein localises to the nucleus. It localises to the nucleoplasm. Its subcellular location is the cytoplasm. It is found in the cytoskeleton. The protein resides in the spindle. The protein localises to the chromosome. Its function is as follows. Required for chromosome movement and orientation on spindle poles in mitosis and meiosis. May play a role in early anterior-posterior chromosome movement in mitotic embryos. The protein is Kinesin-like protein klp-19 of Caenorhabditis elegans.